Consider the following 182-residue polypeptide: Ribosome-recycling factor (182 aa).

This sequence belongs to the RRF family.

It localises to the cytoplasm. Responsible for the release of ribosomes from messenger RNA at the termination of protein biosynthesis. May increase the efficiency of translation by recycling ribosomes from one round of translation to another. The protein is Ribosome-recycling factor of Prochlorococcus marinus (strain MIT 9313).